A 528-amino-acid polypeptide reads, in one-letter code: UDP-glucuronosyltransferase 2B30 (528 aa).

An N-terminal signal peptide occupies residues 1–23 (MSMKWTSALLLIQLSCYLSSGNC). Lysine 135 bears the N6-succinyllysine mark. Asparagine 315 carries N-linked (GlcNAc...) asparagine glycosylation. Residues 493-513 (VIGFLLACVATVIFIITKCLF) form a helical membrane-spanning segment.

It belongs to the UDP-glycosyltransferase family. As to expression, expressed in several tissues, including prostate, testis, mammary gland, kidney, adrenals and intestine.

It is found in the microsome membrane. The protein resides in the endoplasmic reticulum membrane. It catalyses the reaction glucuronate acceptor + UDP-alpha-D-glucuronate = acceptor beta-D-glucuronoside + UDP + H(+). Functionally, UDPGTs are of major importance in the conjugation and subsequent elimination of potentially toxic xenobiotics and endogenous compounds. This isozyme has glucuronidating capacity on testosterone, dihydrotestosterone, 5-alpha-androstane-3-alpha,17-beta-diol, androsterone, oestradiol, tetrahydroaldosterone and tetrahydrocortisone. This enzyme is essential to inactivation of several steroids. The chain is UDP-glucuronosyltransferase 2B30 (UGT2B30) from Macaca fascicularis (Crab-eating macaque).